We begin with the raw amino-acid sequence, 513 residues long: Cytochrome P450 monooxygenase CYP3 (513 aa).

The interval 1 to 21 (MLPRSLGHSTSELSPPFDGPN) is disordered. Cys451 contacts heme.

It belongs to the cytochrome P450 family. Requires heme as cofactor.

The protein operates within secondary metabolite biosynthesis. Functionally, cytochrome P450 monooxygenase; part of the gene cluster that mediates the biosynthesis of a tyrosine-derived cytochalasan acting as a fungal signal recognized by resistant rice plants and leads to avirulence in Pi33 resistant rice cultivars. The first step in the pathway is catalyzed by the hybrid PKS-NRPS ACE1, assisted by the enoyl reductase RAP1, that are responsible for fusion of the tyrosine precursor and the polyketide backbone. The polyketide synthase module (PKS) of ACE1 is responsible for the synthesis of the polyketide backbone and the downstream nonribosomal peptide synthetase (NRPS) amidates the carboxyl end of the polyketide with the tyrosine precursor. Because ACE1 lacks a designated enoylreductase (ER) domain, the required activity is provided the enoyl reductase RAP1. Reduction by the hydrolyase ORFZ, followed by dehydration and intra-molecular Diels-Alder cyclization by the Diels-Alderase ORF3 then yield the required isoindolone-fused macrocycle. A number of oxidative steps catalyzed by the tailoring enzymes identified within the cluster, including cytochrome P450 monooxygenases CYP1 to CYP4, the FAD-linked oxidoreductase OXR2 and the short-chain dehydrogenase/reductase OXR1, are further required to afford the final cytochalasans that confer avirulence and which have still to be identified. The monooxygenase CYP1 has been shown to be a site-selective C-18 hydroxylase whereas the function of CYP3 is the site-selective epoxidation of the C-6/C-7 olefin that is present in some intermediate compounds. Finally, SYN2 and RAP2 are not required for avirulence in Pi33 resistant rice cultivars. This Pyricularia oryzae (strain 70-15 / ATCC MYA-4617 / FGSC 8958) (Rice blast fungus) protein is Cytochrome P450 monooxygenase CYP3.